Here is a 207-residue protein sequence, read N- to C-terminus: 2,3-bisphosphoglycerate-dependent phosphoglycerate mutase (207 aa).

Substrate contacts are provided by residues 10-17 (RHGQSEWN), 23-24 (TG), Arg62, 89-92 (ERDY), Lys100, 116-117 (RR), and 160-161 (GN). His11 serves as the catalytic Tele-phosphohistidine intermediate. Glu89 acts as the Proton donor/acceptor in catalysis.

The protein belongs to the phosphoglycerate mutase family. BPG-dependent PGAM subfamily. As to quaternary structure, homodimer.

The catalysed reaction is (2R)-2-phosphoglycerate = (2R)-3-phosphoglycerate. It functions in the pathway carbohydrate degradation; glycolysis; pyruvate from D-glyceraldehyde 3-phosphate: step 3/5. Functionally, catalyzes the interconversion of 2-phosphoglycerate and 3-phosphoglycerate. The protein is 2,3-bisphosphoglycerate-dependent phosphoglycerate mutase of Bradyrhizobium sp. (strain BTAi1 / ATCC BAA-1182).